The sequence spans 82 residues: Small ribosomal subunit protein uS17 (82 aa).

Belongs to the universal ribosomal protein uS17 family. As to quaternary structure, part of the 30S ribosomal subunit.

In terms of biological role, one of the primary rRNA binding proteins, it binds specifically to the 5'-end of 16S ribosomal RNA. This chain is Small ribosomal subunit protein uS17, found in Shewanella sediminis (strain HAW-EB3).